The chain runs to 356 residues: sn-glycerol-3-phosphate import ATP-binding protein UgpC (356 aa).

The region spanning 4 to 235 (LKLQAVTKSW…PASRFVASFI (232 aa)) is the ABC transporter domain. An ATP-binding site is contributed by 37–44 (GPSGCGKS).

It belongs to the ABC transporter superfamily. sn-glycerol-3-phosphate importer (TC 3.A.1.1.3) family. In terms of assembly, the complex is composed of two ATP-binding proteins (UgpC), two transmembrane proteins (UgpA and UgpE) and a solute-binding protein (UgpB).

The protein localises to the cell inner membrane. The enzyme catalyses sn-glycerol 3-phosphate(out) + ATP + H2O = sn-glycerol 3-phosphate(in) + ADP + phosphate + H(+). In terms of biological role, part of the ABC transporter complex UgpBAEC involved in sn-glycerol-3-phosphate (G3P) import. Responsible for energy coupling to the transport system. This is sn-glycerol-3-phosphate import ATP-binding protein UgpC from Salmonella choleraesuis (strain SC-B67).